Here is a 142-residue protein sequence, read N- to C-terminus: Type II secretion system core protein G (142 aa).

Residues 1–8 constitute a propeptide, leader sequence; sequence MRRQSQRG. F9 bears the N-methylphenylalanine mark. The chain crosses the membrane as a helical span at residues 9-29; that stretch reads FTLLEIMVVIVIMGILASLVV. Residues 122–142 are disordered; that stretch reads SGQDGVPGTDDDIGNWTLSKK.

This sequence belongs to the GSP G family. In terms of assembly, type II secretion system is composed of four main components: the outer membrane complex, the inner membrane complex, the cytoplasmic secretion ATPase and the periplasm-spanning pseudopilus. Forms homomultimers. In terms of processing, cleaved by the prepilin peptidase. Methylated by prepilin peptidase at the amino group of the N-terminal phenylalanine once the leader sequence is cleaved.

The protein localises to the cell inner membrane. Core component of the type II secretion system required for the energy-dependent secretion of extracellular factors such as proteases and toxins from the periplasm. Pseudopilin (pilin-like) protein that polymerizes to form the pseudopilus. Further polymerization triggers pseudopilus growth. The sequence is that of Type II secretion system core protein G from Klebsiella michiganensis (strain ATCC 8724 / DSM 4798 / JCM 20051 / NBRC 3318 / NRRL B-199 / KCTC 1686 / BUCSAV 143 / CCM 1901).